A 176-amino-acid polypeptide reads, in one-letter code: Ribosome maturation factor RimM (176 aa).

A PRC barrel domain is found at 93–166 (ADEYYHADLI…QVVIEPPNEI (74 aa)).

Belongs to the RimM family. As to quaternary structure, binds ribosomal protein uS19.

The protein resides in the cytoplasm. Its function is as follows. An accessory protein needed during the final step in the assembly of 30S ribosomal subunit, possibly for assembly of the head region. Essential for efficient processing of 16S rRNA. May be needed both before and after RbfA during the maturation of 16S rRNA. It has affinity for free ribosomal 30S subunits but not for 70S ribosomes. The sequence is that of Ribosome maturation factor RimM from Rhodopseudomonas palustris (strain ATCC BAA-98 / CGA009).